The sequence spans 234 residues: Glucosamine-6-phosphate deaminase (234 aa).

D62 serves as the catalytic Proton acceptor; for enolization step. Residue N128 is the For ring-opening step of the active site. The active-site Proton acceptor; for ring-opening step is H130. The For ring-opening step role is filled by E135.

This sequence belongs to the glucosamine/galactosamine-6-phosphate isomerase family. NagB subfamily.

It carries out the reaction alpha-D-glucosamine 6-phosphate + H2O = beta-D-fructose 6-phosphate + NH4(+). It functions in the pathway amino-sugar metabolism; N-acetylneuraminate degradation; D-fructose 6-phosphate from N-acetylneuraminate: step 5/5. Functionally, catalyzes the reversible isomerization-deamination of glucosamine 6-phosphate (GlcN6P) to form fructose 6-phosphate (Fru6P) and ammonium ion. The protein is Glucosamine-6-phosphate deaminase of Streptococcus pyogenes serotype M49 (strain NZ131).